A 328-amino-acid polypeptide reads, in one-letter code: Delta-aminolevulinic acid dehydratase (328 aa).

Positions 122, 124, and 132 each coordinate Zn(2+). Catalysis depends on Lys-197, which acts as the Schiff-base intermediate with substrate. 5-aminolevulinate contacts are provided by Arg-207 and Arg-219. Glu-235 is a binding site for Mg(2+). Lys-250 functions as the Schiff-base intermediate with substrate in the catalytic mechanism. Ser-276 and Tyr-315 together coordinate 5-aminolevulinate.

The protein belongs to the ALAD family. In terms of assembly, homooctamer. Zn(2+) is required as a cofactor.

The enzyme catalyses 2 5-aminolevulinate = porphobilinogen + 2 H2O + H(+). It functions in the pathway porphyrin-containing compound metabolism; protoporphyrin-IX biosynthesis; coproporphyrinogen-III from 5-aminolevulinate: step 1/4. Its function is as follows. Catalyzes an early step in the biosynthesis of tetrapyrroles. Binds two molecules of 5-aminolevulinate per subunit, each at a distinct site, and catalyzes their condensation to form porphobilinogen. In Halalkalibacterium halodurans (strain ATCC BAA-125 / DSM 18197 / FERM 7344 / JCM 9153 / C-125) (Bacillus halodurans), this protein is Delta-aminolevulinic acid dehydratase (hemB).